We begin with the raw amino-acid sequence, 255 residues long: Small ribosomal subunit protein eS1 (255 aa).

Over residues 1–18 (MAVGKNKRLSKGKKGLKK) the composition is skewed to basic residues. The disordered stretch occupies residues 1–28 (MAVGKNKRLSKGKKGLKKRTQDPFSRKD). Ala2 is subject to N-acetylalanine; partial. Residues 19-28 (RTQDPFSRKD) are compositionally biased toward basic and acidic residues.

Belongs to the eukaryotic ribosomal protein eS1 family. Component of the small ribosomal subunit. Mature ribosomes consist of a small (40S) and a large (60S) subunit. The 40S subunit contains about 33 different proteins and 1 molecule of RNA (18S). The 60S subunit contains about 49 different proteins and 3 molecules of RNA (25S, 5.8S and 5S).

The protein resides in the cytoplasm. This chain is Small ribosomal subunit protein eS1, found in Ajellomyces dermatitidis (strain ER-3 / ATCC MYA-2586) (Blastomyces dermatitidis).